Consider the following 449-residue polypeptide: 4-aminobutyrate aminotransferase (449 aa).

Position 294 is an N6-(pyridoxal phosphate)lysine (Lys294).

This sequence belongs to the class-III pyridoxal-phosphate-dependent aminotransferase family. Requires pyridoxal 5'-phosphate as cofactor.

It catalyses the reaction 4-aminobutanoate + 2-oxoglutarate = succinate semialdehyde + L-glutamate. It carries out the reaction (S)-3-amino-2-methylpropanoate + 2-oxoglutarate = 2-methyl-3-oxopropanoate + L-glutamate. It participates in amino-acid degradation; 4-aminobutanoate degradation. The sequence is that of 4-aminobutyrate aminotransferase (gabT) from Mycobacterium bovis (strain ATCC BAA-935 / AF2122/97).